Here is a 612-residue protein sequence, read N- to C-terminus: Probable exonuclease subunit 2 (612 aa).

ATP is bound at residue 35–42; that stretch reads GGNGLGKS. Coiled-coil stretches lie at residues 163-193 and 288-459; these read NQEQ…GQMA and SRAS…VADL.

The protein to phage T4 protein GP46. As to quaternary structure, could consist of two subunits: D13 and D12.

Possible exonuclease that may play a role in viral genome replication, DNA recombination, and host DNA degradation. This is Probable exonuclease subunit 2 (D13) from Escherichia phage T5 (Enterobacteria phage T5).